A 315-amino-acid chain; its full sequence is Olfactory receptor 3A1 (315 aa).

The Extracellular portion of the chain corresponds to 1 to 28; sequence MQPESGANGTVIAEFILLGLLEAPGLQP. Asparagine 8 carries an N-linked (GlcNAc...) asparagine glycan. Residues 29 to 52 form a helical membrane-spanning segment; it reads VVFVLFLFAYLVTVRGNLSILAAV. The Cytoplasmic portion of the chain corresponds to 53-60; it reads LVEPKLHT. The helical transmembrane segment at 61–82 threads the bilayer; sequence PMYFFLGNLSVLDVGCISVTVP. The Extracellular segment spans residues 83 to 103; it reads SMLSRLLSRKRAVPCGACLTQ. Cysteine 100 and cysteine 192 are joined by a disulfide. A helical membrane pass occupies residues 104-123; sequence LFFFHLFVGVDCFLLTAMAY. The Cytoplasmic segment spans residues 124-143; that stretch reads DRFLAICRPLTYSTRMSQTV. A helical transmembrane segment spans residues 144-161; sequence QRMLVAASWACAFTNALT. Residues 162–199 are Extracellular-facing; sequence HTVAMSTLNFCGPNVINHFYCDLPQLFQLSCSSTQLNE. A helical membrane pass occupies residues 200-223; that stretch reads LLLFAVGFIMAGTPMALIVISYIH. The Cytoplasmic portion of the chain corresponds to 224–240; the sequence is VAAAVLRIRSVEGRKKA. The chain crosses the membrane as a helical span at residues 241 to 264; the sequence is FSTCGSHLTVVAIFYGSGIFNYMR. The Extracellular portion of the chain corresponds to 265–275; the sequence is LGSTKLSDKDK. The chain crosses the membrane as a helical span at residues 276–295; it reads AVGIFNTVINPMLNPIIYSF. At 296–315 the chain is on the cytoplasmic side; the sequence is RNPDVQSAIWRMLTGRRSLA.

This sequence belongs to the G-protein coupled receptor 1 family.

Its subcellular location is the cell membrane. Its function is as follows. Odorant receptor. In Homo sapiens (Human), this protein is Olfactory receptor 3A1 (OR3A1).